The primary structure comprises 326 residues: Vitamin B12 import system permease protein BtuC (326 aa).

The next 9 helical transmembrane spans lie at 15-35 (WLLS…CAGE), 61-81 (LAVL…QALF), 88-108 (PGLL…VLLG), 112-132 (LPGW…TLIL), 146-166 (LLAG…AIYF), 184-204 (GGVD…LIWI), 240-260 (GWMV…GLVI), 274-294 (VLLP…DVVA), and 302-322 (ELPI…WLLL).

The protein belongs to the binding-protein-dependent transport system permease family. FecCD subfamily. The complex is composed of two ATP-binding proteins (BtuD), two transmembrane proteins (BtuC) and a solute-binding protein (BtuF).

Its subcellular location is the cell inner membrane. Part of the ABC transporter complex BtuCDF involved in vitamin B12 import. Involved in the translocation of the substrate across the membrane. This chain is Vitamin B12 import system permease protein BtuC, found in Salmonella agona (strain SL483).